Reading from the N-terminus, the 139-residue chain is Ribosome-binding factor A (139 aa).

This sequence belongs to the RbfA family. In terms of assembly, monomer. Binds 30S ribosomal subunits, but not 50S ribosomal subunits or 70S ribosomes.

It localises to the cytoplasm. Its function is as follows. One of several proteins that assist in the late maturation steps of the functional core of the 30S ribosomal subunit. Associates with free 30S ribosomal subunits (but not with 30S subunits that are part of 70S ribosomes or polysomes). Required for efficient processing of 16S rRNA. May interact with the 5'-terminal helix region of 16S rRNA. This is Ribosome-binding factor A from Methylobacterium sp. (strain 4-46).